Reading from the N-terminus, the 138-residue chain is Large-conductance mechanosensitive channel (138 aa).

Transmembrane regions (helical) follow at residues 10-30 and 76-96; these read FAMR…AAFG and GSFI…FLAI.

Belongs to the MscL family. Homopentamer.

The protein localises to the cell inner membrane. Functionally, channel that opens in response to stretch forces in the membrane lipid bilayer. May participate in the regulation of osmotic pressure changes within the cell. The protein is Large-conductance mechanosensitive channel of Serratia proteamaculans (strain 568).